The primary structure comprises 596 residues: Elongation factor 4 (596 aa).

The 183-residue stretch at 2–184 (KQIRNFSIIA…VIVAKIPPPE (183 aa)) folds into the tr-type G domain. GTP is bound by residues 14-19 (DHGKST) and 131-134 (NKID).

This sequence belongs to the TRAFAC class translation factor GTPase superfamily. Classic translation factor GTPase family. LepA subfamily.

The protein localises to the cell inner membrane. It carries out the reaction GTP + H2O = GDP + phosphate + H(+). In terms of biological role, required for accurate and efficient protein synthesis under certain stress conditions. May act as a fidelity factor of the translation reaction, by catalyzing a one-codon backward translocation of tRNAs on improperly translocated ribosomes. Back-translocation proceeds from a post-translocation (POST) complex to a pre-translocation (PRE) complex, thus giving elongation factor G a second chance to translocate the tRNAs correctly. Binds to ribosomes in a GTP-dependent manner. The sequence is that of Elongation factor 4 from Shewanella baltica (strain OS155 / ATCC BAA-1091).